The chain runs to 190 residues: Threonylcarbamoyl-AMP synthase (190 aa).

Residues 7–190 (GDAIAAAIDV…ALTGELFRQG (184 aa)) enclose the YrdC-like domain.

This sequence belongs to the SUA5 family. TsaC subfamily.

The protein resides in the cytoplasm. It catalyses the reaction L-threonine + hydrogencarbonate + ATP = L-threonylcarbamoyladenylate + diphosphate + H2O. Required for the formation of a threonylcarbamoyl group on adenosine at position 37 (t(6)A37) in tRNAs that read codons beginning with adenine. Catalyzes the conversion of L-threonine, HCO(3)(-)/CO(2) and ATP to give threonylcarbamoyl-AMP (TC-AMP) as the acyladenylate intermediate, with the release of diphosphate. This Escherichia coli O157:H7 protein is Threonylcarbamoyl-AMP synthase.